A 621-amino-acid chain; its full sequence is 1-deoxy-D-xylulose-5-phosphate synthase (621 aa).

Thiamine diphosphate is bound by residues H80 and 121 to 123; that span reads GHS. D152 contacts Mg(2+). Residues 153 to 154, N181, Y288, and E370 contribute to the thiamine diphosphate site; that span reads GA. N181 lines the Mg(2+) pocket.

It belongs to the transketolase family. DXPS subfamily. As to quaternary structure, homodimer. It depends on Mg(2+) as a cofactor. The cofactor is thiamine diphosphate.

The enzyme catalyses D-glyceraldehyde 3-phosphate + pyruvate + H(+) = 1-deoxy-D-xylulose 5-phosphate + CO2. Its pathway is metabolic intermediate biosynthesis; 1-deoxy-D-xylulose 5-phosphate biosynthesis; 1-deoxy-D-xylulose 5-phosphate from D-glyceraldehyde 3-phosphate and pyruvate: step 1/1. In terms of biological role, catalyzes the acyloin condensation reaction between C atoms 2 and 3 of pyruvate and glyceraldehyde 3-phosphate to yield 1-deoxy-D-xylulose-5-phosphate (DXP). The chain is 1-deoxy-D-xylulose-5-phosphate synthase from Erwinia tasmaniensis (strain DSM 17950 / CFBP 7177 / CIP 109463 / NCPPB 4357 / Et1/99).